The chain runs to 448 residues: Probable D-serine dehydratase (448 aa).

K119 carries the post-translational modification N6-(pyridoxal phosphate)lysine.

It belongs to the serine/threonine dehydratase family. DsdA subfamily. Pyridoxal 5'-phosphate is required as a cofactor.

The enzyme catalyses D-serine = pyruvate + NH4(+). This is Probable D-serine dehydratase from Chromobacterium violaceum (strain ATCC 12472 / DSM 30191 / JCM 1249 / CCUG 213 / NBRC 12614 / NCIMB 9131 / NCTC 9757 / MK).